Consider the following 136-residue polypeptide: Calcitonin (136 aa).

The first 25 residues, 1-25 (MGFLKFSPFLVVSILLLYQACGLQA), serve as a signal peptide directing secretion. A propeptide spanning residues 26 to 82 (VPLRSTLESSPGMATLSEEEARLLAALVQNYMQMKVRELEQEEEQEAEGSSLDSPRS) is cleaved from the precursor. S42 bears the Phosphoserine mark. The disordered stretch occupies residues 64-84 (LEQEEEQEAEGSSLDSPRSKR). A disulfide bridge links C85 with C91. N-linked (GlcNAc...) asparagine glycosylation occurs at N87. A disordered region spans residues 114 to 136 (GAPGKKRDMAKDLETNHHPYFGN). The residue at position 116 (P116) is a Proline amide. Positions 118 to 130 (KKRDMAKDLETNH) are enriched in basic and acidic residues. Residues 121-136 (DMAKDLETNHHPYFGN) constitute a propeptide that is removed on maturation.

It belongs to the calcitonin family.

The protein localises to the secreted. In terms of biological role, calcitonin is a peptide hormone that causes a rapid but short-lived drop in the level of calcium and phosphate in blood by promoting the incorporation of those ions in the bones. Calcitonin function is mediated by the calcitonin receptor/CALCR and the CALCR-RAMP2 (AMYR2) receptor complex. The protein is Calcitonin of Rattus norvegicus (Rat).